Consider the following 724-residue polypeptide: Probable serine/threonine-protein kinase KKQ8 (724 aa).

Disordered regions lie at residues 1–81 (MVMQ…RQRS) and 93–188 (HPFR…KDIL). At S19 the chain carries Phosphoserine. The span at 45–54 (PYRSSSTSPK) shows a compositional bias: low complexity. Residues 95–106 (FRQTGSGASNSP) are compositionally biased toward polar residues. The span at 143–162 (RSSSVSSCDSSNGTTSSSDS) shows a compositional bias: low complexity. Phosphoserine is present on residues S232, S238, and S241. Residues 329-355 (SQTNHEKRTGQSPNDSNRSSPTQGRED) form a disordered region. Residues 338–351 (GQSPNDSNRSSPTQ) show a composition bias toward polar residues. In terms of domain architecture, Protein kinase spans 412–712 (GHPVGLVGAG…VGKLLDMQWM (301 aa)). ATP is bound by residues 418-426 (VGAGAYGEV) and K455. The Proton acceptor role is filled by D563.

This sequence belongs to the protein kinase superfamily. CAMK Ser/Thr protein kinase family. NPR/HAL subfamily. HAL5 sub-subfamily.

It localises to the cytoplasm. It carries out the reaction L-seryl-[protein] + ATP = O-phospho-L-seryl-[protein] + ADP + H(+). The enzyme catalyses L-threonyl-[protein] + ATP = O-phospho-L-threonyl-[protein] + ADP + H(+). This chain is Probable serine/threonine-protein kinase KKQ8 (KKQ8), found in Saccharomyces cerevisiae (strain ATCC 204508 / S288c) (Baker's yeast).